The following is a 733-amino-acid chain: Polyribonucleotide nucleotidyltransferase (733 aa).

Asp489 and Asp495 together coordinate Mg(2+). Residues 556–615 form the KH domain; sequence PKIDTIKIDVDKIKIVIGKGGETIDKIIAETGVKIDIDEEGNVSIYSSDQDAINRAKEII. The S1 motif domain occupies 625–693; that stretch reads DEVYHAKVVR…AKGRVDASMK (69 aa). Residues 691–733 are disordered; it reads SMKVLLPRPPKSDKPKHHHDKGHHPHKEYKGHKDHQESPKTEE. The span at 704–723 shows a compositional bias: basic residues; the sequence is KPKHHHDKGHHPHKEYKGHK. A compositionally biased stretch (basic and acidic residues) spans 724-733; it reads DHQESPKTEE.

This sequence belongs to the polyribonucleotide nucleotidyltransferase family. Mg(2+) is required as a cofactor.

Its subcellular location is the cytoplasm. It carries out the reaction RNA(n+1) + phosphate = RNA(n) + a ribonucleoside 5'-diphosphate. Functionally, involved in mRNA degradation. Catalyzes the phosphorolysis of single-stranded polyribonucleotides processively in the 3'- to 5'-direction. The polypeptide is Polyribonucleotide nucleotidyltransferase (Streptococcus sanguinis (strain SK36)).